The chain runs to 504 residues: ATP-dependent RNA helicase DBP3 (504 aa).

Positions methionine 1 to glutamate 14 are enriched in basic and acidic residues. Residues methionine 1–serine 65 are disordered. The segment covering serine 20 to lysine 53 has biased composition (basic residues). Positions leucine 94–alanine 120 match the Q motif motif. Positions tryptophan 123 to valine 296 constitute a Helicase ATP-binding domain. Position 136–143 (alanine 136–threonine 143) interacts with ATP. A DEAD box motif is present at residues aspartate 243 to aspartate 246. Residues lysine 325–glycine 474 enclose the Helicase C-terminal domain.

It belongs to the DEAD box helicase family. DDX5/DBP2 subfamily.

The protein resides in the nucleus. It localises to the nucleolus. It carries out the reaction ATP + H2O = ADP + phosphate + H(+). Its function is as follows. ATP-dependent RNA helicase required for 60S ribosomal subunit synthesis. Involved in efficient pre-rRNA processing, predominantly at site A3, which is necessary for the normal formation of 25S and 5.8S rRNAs. The polypeptide is ATP-dependent RNA helicase DBP3 (DBP3) (Kluyveromyces lactis (strain ATCC 8585 / CBS 2359 / DSM 70799 / NBRC 1267 / NRRL Y-1140 / WM37) (Yeast)).